A 1131-amino-acid polypeptide reads, in one-letter code: Filamin A-interacting protein 1-like (1131 aa).

The tract at residues 1-62 is disordered; the sequence is MRSRSSNAEG…KSHTGKGHHT (62 aa). Over residues 50–62 the composition is skewed to basic and acidic residues; sequence VSEKSHTGKGHHT. Coiled-coil stretches lie at residues 139-583 and 610-780; these read NELD…LSKV and SKST…KSLR. A Phosphoserine modification is found at serine 789. A phosphothreonine mark is found at threonine 984 and threonine 992. Residue serine 1050 is modified to Phosphoserine.

Belongs to the FILIP1 family.

It is found in the cytoplasm. It localises to the membrane. The protein resides in the nucleus. In terms of biological role, acts as a regulator of the antiangiogenic activity on endothelial cells. When overexpressed in endothelial cells, leads to inhibition of cell proliferation and migration and an increase in apoptosis. Inhibits melanoma growth When expressed in tumor-associated vasculature. The sequence is that of Filamin A-interacting protein 1-like (Filip1l) from Mus musculus (Mouse).